Consider the following 548-residue polypeptide: (S)-beta-macrocarpene synthase (548 aa).

The Mg(2+) site is built by Asp-302 and Asp-306. The substrate site is built by Asp-302, Asp-306, Arg-443, and Asn-446. The DDXXD motif signature appears at 302 to 306 (DDTLD). Residues Asn-446, Ser-450, and Glu-454 each coordinate Mg(2+).

This sequence belongs to the terpene synthase family. As to quaternary structure, monomer. Requires Mg(2+) as cofactor. Mn(2+) serves as cofactor. Expressed in roots. Not detected in leaves, unless damaged by herbivory or infected by fungi.

It localises to the cytoplasm. It carries out the reaction (S)-beta-bisabolene = (S)-beta-macrocarpene. The enzyme catalyses (2E,6E)-farnesyl diphosphate = (S)-beta-bisabolene + diphosphate. It catalyses the reaction (2E)-geranyl diphosphate = (4S)-limonene + diphosphate. The catalysed reaction is (2E)-geranyl diphosphate = beta-myrcene + diphosphate. It carries out the reaction (2E)-geranyl diphosphate = terpinolene + diphosphate. The enzyme catalyses (2E)-geranyl diphosphate + H2O = (S)-linalool + diphosphate. The protein operates within secondary metabolite biosynthesis; terpenoid biosynthesis. In terms of biological role, involved in the biosynthesis of the bicyclic sesquiterpene (S)-beta-macrocarpene. Can use both geranyl diphosphate and farnesyl diphosphate as substrate, but not geranylgeranyl diphosphate. Produces mainly (S)-beta-macrocarpene, but also smaller amounts of beta-bisabolene and (E)-beta-farnesene when used with farnesyl diphosphate as substrate. In the presence of geranyl diphosphate, produces the acyclic monoterpenes beta-myrcene and linalool along with minor amounts of the cyclic compounds limonene, alpha-thujene, sabinene and alpha-terpinolene. May be involved in plant defense. This chain is (S)-beta-macrocarpene synthase, found in Zea mays (Maize).